A 263-amino-acid chain; its full sequence is Probable HTH-type transcriptional regulator ArcR (263 aa).

Residues 14-74 (ITSVLNAVEI…DGDGTYQLGD (61 aa)) enclose the HTH iclR-type domain. The segment at residues 35 to 54 (LQELTTELDLTKATIHTYMA) is a DNA-binding region (H-T-H motif). Positions 89-262 (LYRLGREEID…ANIIEVRLET (174 aa)) constitute an IclR-ED domain.

Functionally, probably regulates transcription of the arcABC operon. The sequence is that of Probable HTH-type transcriptional regulator ArcR (arcR) from Halobacterium salinarum (strain ATCC 29341 / DSM 671 / R1).